Here is a 66-residue protein sequence, read N- to C-terminus: UPF0370 protein YpfN (66 aa).

Residues 4-24 form a helical membrane-spanning segment; that stretch reads LAKYWWILVLVFLVGVLLNVI. Residues 39–66 form a disordered region; it reads KPELPPHRDFNDKWDDEEDWPKKDQPKK. Basic and acidic residues predominate over residues 42-51; that stretch reads LPPHRDFNDK.

This sequence belongs to the UPF0370 family.

It localises to the cell membrane. The protein is UPF0370 protein YpfN of Salmonella paratyphi A (strain AKU_12601).